A 566-amino-acid chain; its full sequence is Deformed epidermal autoregulatory factor 1 homolog (566 aa).

2 disordered regions span residues 33-62 (AESE…ETRR) and 163-191 (GLKG…KGGT). The span at 170-182 (PLTPGPQSPPTPL) shows a compositional bias: pro residues. The residue at position 172 (threonine 172) is a Phosphothreonine. The residue at position 177 (serine 177) is a Phosphoserine. The residue at position 180 (threonine 180) is a Phosphothreonine. An SAND domain is found at 194 to 274 (NWDPSVYDSE…QCLIQDGILN (81 aa)). The Nuclear localization signal motif lies at 300-306 (PYKRRKK). Residues 404-479 (IAPFPEAALP…QLKTLFEQAK (76 aa)) are interaction with LMO4. Threonine 433 is subject to Phosphothreonine. A phosphoserine mark is found at serine 444 and serine 449. Residues cysteine 505, cysteine 508, cysteine 516, cysteine 519, cysteine 525, cysteine 529, histidine 537, and cysteine 541 each contribute to the Zn(2+) site. Residues 505–541 (CVNCGREAMSECTGCHKVNYCSTFCQRKDWKDHQHVC) form an MYND-type zinc finger.

Homodimer. Isoform 1 and isoform 2 may form a heterodimer. May interact with the corepressors NCOR1 and NCRO2. Identified in a complex with XRCC5 and XRCC6. Interacts (via the SAND domain) with the DNA-PK complex subunit XRCC6; the interaction is direct with XRCC6 and may be inhibited by DNA-binding. Interacts with LMO4; LMO4 blocks export from nucleus. Interacts with LMO2 and CLIM2. May be phosphorylated by DNA-PK complex in a DNA independent manner (in vitro). Ubiquitously expressed during embryogenesis, with higher expression in regions of the central nervous system, dorsal root ganglia, submandibular gland, epidermis and breast. In 12-week-old NOD mice, expression of isoform 2 is sevenfold higher in lymph node stromal elements than in T-cells and tenfold higher than in B-cells.

The protein resides in the nucleus. It is found in the cytoplasm. In terms of biological role, transcription factor that binds to sequence with multiple copies of 5'-TTC[CG]G-3' present in its own promoter and that of the HNRPA2B1 gene. Down-regulates transcription of these genes. Binds to the retinoic acid response element (RARE) 5'-AGGGTTCACCGAAAGTTCA-3'. Activates the proenkephalin gene independently of promoter binding, probably through protein-protein interaction. Regulates epithelial cell proliferation and side-branching in the mammary gland. Required for neural tube closure and skeletal patterning. Controls the expression of peripheral tissue antigens in pancreatic lymph nodes. Isoform 1 displays greater transcriptional activity than isoform 2. Isoform 2 may inhibit transcriptional activity of isoform 1 by interacting with it and retaining it in the cytoplasm. Transcriptional activator of EIF4G3. May also involved in behavior. The polypeptide is Deformed epidermal autoregulatory factor 1 homolog (Deaf1) (Mus musculus (Mouse)).